The chain runs to 48 residues: Protein YgdT (48 aa).

This chain is Protein YgdT (ygdT), found in Escherichia coli (strain K12).